Reading from the N-terminus, the 363-residue chain is Phosphoserine aminotransferase (363 aa).

An L-glutamate-binding site is contributed by Arg46. Pyridoxal 5'-phosphate-binding positions include 80 to 81 (AT), Trp106, Thr156, Asp176, and Gln199. An N6-(pyridoxal phosphate)lysine modification is found at Lys200. 241–242 (NT) is a pyridoxal 5'-phosphate binding site.

It belongs to the class-V pyridoxal-phosphate-dependent aminotransferase family. SerC subfamily. Homodimer. Pyridoxal 5'-phosphate serves as cofactor.

Its subcellular location is the cytoplasm. The catalysed reaction is O-phospho-L-serine + 2-oxoglutarate = 3-phosphooxypyruvate + L-glutamate. It carries out the reaction 4-(phosphooxy)-L-threonine + 2-oxoglutarate = (R)-3-hydroxy-2-oxo-4-phosphooxybutanoate + L-glutamate. It participates in amino-acid biosynthesis; L-serine biosynthesis; L-serine from 3-phospho-D-glycerate: step 2/3. It functions in the pathway cofactor biosynthesis; pyridoxine 5'-phosphate biosynthesis; pyridoxine 5'-phosphate from D-erythrose 4-phosphate: step 3/5. Its function is as follows. Catalyzes the reversible conversion of 3-phosphohydroxypyruvate to phosphoserine and of 3-hydroxy-2-oxo-4-phosphonooxybutanoate to phosphohydroxythreonine. The polypeptide is Phosphoserine aminotransferase (Leptospira interrogans serogroup Icterohaemorrhagiae serovar copenhageni (strain Fiocruz L1-130)).